Consider the following 208-residue polypeptide: Ribosomal RNA small subunit methyltransferase G (208 aa).

Residues Gly76, Leu81, 127-128, and Arg142 each bind S-adenosyl-L-methionine; that span reads VE.

The protein belongs to the methyltransferase superfamily. RNA methyltransferase RsmG family.

It localises to the cytoplasm. It catalyses the reaction guanosine(527) in 16S rRNA + S-adenosyl-L-methionine = N(7)-methylguanosine(527) in 16S rRNA + S-adenosyl-L-homocysteine. Its function is as follows. Specifically methylates the N7 position of guanine in position 527 of 16S rRNA. This is Ribosomal RNA small subunit methyltransferase G from Legionella pneumophila (strain Lens).